The following is a 71-amino-acid chain: Small ribosomal subunit protein bS21 (71 aa).

The interval 37 to 71 is disordered; it reads HYEKPTAERKRKKAAAVKRHMKKLSRDNARRVKLY. A compositionally biased stretch (basic residues) spans 45 to 59; sequence RKRKKAAAVKRHMKK. Residues 60 to 71 are compositionally biased toward basic and acidic residues; sequence LSRDNARRVKLY.

It belongs to the bacterial ribosomal protein bS21 family.

The chain is Small ribosomal subunit protein bS21 from Pseudoalteromonas translucida (strain TAC 125).